We begin with the raw amino-acid sequence, 256 residues long: Small ribosomal subunit protein eS1 (256 aa).

Residues Met1–Lys18 show a composition bias toward basic residues. The interval Met1–Ala20 is disordered. Residue Ala2 is modified to N-acetylalanine; partial.

This sequence belongs to the eukaryotic ribosomal protein eS1 family. In terms of assembly, component of the small ribosomal subunit. Mature ribosomes consist of a small (40S) and a large (60S) subunit. The 40S subunit contains about 33 different proteins and 1 molecule of RNA (18S). The 60S subunit contains about 49 different proteins and 3 molecules of RNA (25S, 5.8S and 5S).

Its subcellular location is the cytoplasm. This is Small ribosomal subunit protein eS1 from Chaetomium globosum (strain ATCC 6205 / CBS 148.51 / DSM 1962 / NBRC 6347 / NRRL 1970) (Soil fungus).